Reading from the N-terminus, the 55-residue chain is Large ribosomal subunit protein bL33 (55 aa).

It belongs to the bacterial ribosomal protein bL33 family.

This is Large ribosomal subunit protein bL33 from Micrococcus luteus (strain ATCC 4698 / DSM 20030 / JCM 1464 / CCM 169 / CCUG 5858 / IAM 1056 / NBRC 3333 / NCIMB 9278 / NCTC 2665 / VKM Ac-2230) (Micrococcus lysodeikticus).